An 839-amino-acid chain; its full sequence is Autophagy-related protein 9A (839 aa).

Positions 1 to 20 (MAQFDTEYQRLEASYSDSPP) are disordered. Residue Ala2 is modified to N-acetylalanine. Residues 2 to 61 (AQFDTEYQRLEASYSDSPPGEEDLLVHVAEGSKSPWHHIENLDLFFSRVYNLHQKNGFTC) are Cytoplasmic-facing. The Tyrosine-based sorting signal motif lies at 8-11 (YQRL). Residues Ser14, Ser16, and Ser18 each carry the phosphoserine modification. Residues 62–84 (MLIGEIFELMQFLFVVAFTTFLV) traverse the membrane as a helical segment. The Lumenal segment spans residues 85–128 (SCVDYDILFANKMVNHSLHPTEPVKVTLPDAFLPAQVCSARIQE). Asn99 carries N-linked (GlcNAc...) asparagine glycosylation. A helical transmembrane segment spans residues 129–154 (NGSLITILVIAGVFWIHRLIKFIYNI). Residues 155-290 (CCYWEIHSFY…ELAQRLSNRI (136 aa)) are Cytoplasmic-facing. Residues 291-301 (LWIGIANFLLC) lie within the membrane without spanning it. The Cytoplasmic portion of the chain corresponds to 302–319 (PLILIWQILYAFFSYAEV). Residues 320–328 (LKREPGALG) lie within the membrane without spanning it. Over 329–371 (ARCWSLYGRCYLRHFNELEHELQSRLNRGYKPASKYMNCFLSP) the chain is Cytoplasmic. A helical membrane pass occupies residues 372 to 397 (LLTLLAKNGAFFAGSILAVLIALTIY). Over 398–406 (DEDVLAVEH) the chain is Lumenal. The chain crosses the membrane as a helical span at residues 407–424 (VLTTVTLLGVTVTVCRSF). Over 425 to 470 (IPDQHMVFCPEQLLRVILAHIHYMPDHWQGNAHRSQTRDEFAQLFQ) the chain is Cytoplasmic. An intramembrane segment occupies 471–480 (YKAVFILEEL). Residues 481–483 (LSP) lie on the Cytoplasmic side of the membrane. The stretch at 484-492 (IVTPLILIF) is an intramembrane region. The Cytoplasmic portion of the chain corresponds to 493-839 (CLRPRALEII…DELPPQVHKV (347 aa)). Phosphoserine is present on residues Ser656, Ser735, Ser738, Ser741, and Ser828. Disordered stretches follow at residues 656-686 (SPLQPGQAPTGRAHSTMTGSGVDARTASSGS) and 719-839 (QQAQ…VHKV). Over residues 724–736 (EPERHLWHRRESD) the composition is skewed to basic and acidic residues. Composition is skewed to acidic residues over residues 737 to 747 (ESGESAPDEGG) and 823 to 832 (VPEEGSEDEL).

It belongs to the ATG9 family. Homotrimer; forms a homotrimer with a central pore that forms a path between the two membrane leaflets. Interacts (via cytoplasmic its C-terminus) with ATG2A. Interacts with SUPT20H. Interacts (via the tyrosine-based sorting signal motif) with AP4M1; promoting association with the AP-4 complex. Interacts with ARFIP1 and ARFIP2. Interacts with PI4K2A and PI4KB. Interacts with ATG4A; the interaction is direct and promotes ATG9A trafficking. Ufmylated in a DDRGK1 dependent manner.

It localises to the preautophagosomal structure membrane. Its subcellular location is the cytoplasmic vesicle. The protein resides in the autophagosome membrane. It is found in the golgi apparatus. The protein localises to the trans-Golgi network membrane. It localises to the late endosome membrane. Its subcellular location is the recycling endosome membrane. The protein resides in the endoplasmic reticulum membrane. It is found in the mitochondrion membrane. It carries out the reaction a 1,2-diacyl-sn-glycero-3-phosphocholine(in) = a 1,2-diacyl-sn-glycero-3-phosphocholine(out). The enzyme catalyses a 1,2-diacyl-sn-glycero-3-phospho-L-serine(in) = a 1,2-diacyl-sn-glycero-3-phospho-L-serine(out). The catalysed reaction is a 1,2-diacyl-sn-glycero-3-phosphoethanolamine(in) = a 1,2-diacyl-sn-glycero-3-phosphoethanolamine(out). Its function is as follows. Phospholipid scramblase involved in autophagy by mediating autophagosomal membrane expansion. Cycles between the preautophagosomal structure/phagophore assembly site (PAS) and the cytoplasmic vesicle pool and supplies membrane for the growing autophagosome. Lipid scramblase activity plays a key role in preautophagosomal structure/phagophore assembly by distributing the phospholipids that arrive through ATG2 (ATG2A or ATG2B) from the cytoplasmic to the luminal leaflet of the bilayer, thereby driving autophagosomal membrane expansion. Also required to supply phosphatidylinositol 4-phosphate to the autophagosome initiation site by recruiting the phosphatidylinositol 4-kinase beta (PI4KB) in a process dependent on ARFIP2, but not ARFIP1. In addition to autophagy, also plays a role in necrotic cell death. In Pongo abelii (Sumatran orangutan), this protein is Autophagy-related protein 9A.